Reading from the N-terminus, the 407-residue chain is Methylenetetrahydrofolate--tRNA-(uracil-5-)-methyltransferase TrmFO (407 aa).

Position 9-14 (9-14 (GAGLAG)) interacts with FAD.

It belongs to the MnmG family. TrmFO subfamily. It depends on FAD as a cofactor.

The protein resides in the cytoplasm. The enzyme catalyses uridine(54) in tRNA + (6R)-5,10-methylene-5,6,7,8-tetrahydrofolate + NADH + H(+) = 5-methyluridine(54) in tRNA + (6S)-5,6,7,8-tetrahydrofolate + NAD(+). It catalyses the reaction uridine(54) in tRNA + (6R)-5,10-methylene-5,6,7,8-tetrahydrofolate + NADPH + H(+) = 5-methyluridine(54) in tRNA + (6S)-5,6,7,8-tetrahydrofolate + NADP(+). Functionally, catalyzes the folate-dependent formation of 5-methyl-uridine at position 54 (M-5-U54) in all tRNAs. The chain is Methylenetetrahydrofolate--tRNA-(uracil-5-)-methyltransferase TrmFO from Lactobacillus helveticus (strain DPC 4571).